Consider the following 490-residue polypeptide: UDP-glycosyltransferase 73C7 (490 aa).

UDP-alpha-D-glucose-binding positions include serine 291, 351 to 353 (APQ), 368 to 376 (HCGWNSTLE), and 390 to 393 (FAEQ).

It belongs to the UDP-glycosyltransferase family.

The chain is UDP-glycosyltransferase 73C7 (UGT73C7) from Arabidopsis thaliana (Mouse-ear cress).